The chain runs to 758 residues: Phosphoribosylformylglycinamidine synthase subunit PurL (758 aa).

Residue histidine 57 is part of the active site. 2 residues coordinate ATP: tyrosine 60 and arginine 104. Glutamate 106 serves as a coordination point for Mg(2+). Substrate-binding positions include 107–110 (SHNH) and arginine 129. The active-site Proton acceptor is histidine 108. Aspartate 130 contributes to the Mg(2+) binding site. Substrate is bound at residue glutamine 254. Position 282 (aspartate 282) interacts with Mg(2+). 326 to 328 (ESQ) contacts substrate. ATP contacts are provided by asparagine 509 and glycine 546. Asparagine 547 contacts Mg(2+). Serine 549 is a binding site for substrate.

It belongs to the FGAMS family. Monomer. Part of the FGAM synthase complex composed of 1 PurL, 1 PurQ and 2 PurS subunits.

It localises to the cytoplasm. The catalysed reaction is N(2)-formyl-N(1)-(5-phospho-beta-D-ribosyl)glycinamide + L-glutamine + ATP + H2O = 2-formamido-N(1)-(5-O-phospho-beta-D-ribosyl)acetamidine + L-glutamate + ADP + phosphate + H(+). It participates in purine metabolism; IMP biosynthesis via de novo pathway; 5-amino-1-(5-phospho-D-ribosyl)imidazole from N(2)-formyl-N(1)-(5-phospho-D-ribosyl)glycinamide: step 1/2. Functionally, part of the phosphoribosylformylglycinamidine synthase complex involved in the purines biosynthetic pathway. Catalyzes the ATP-dependent conversion of formylglycinamide ribonucleotide (FGAR) and glutamine to yield formylglycinamidine ribonucleotide (FGAM) and glutamate. The FGAM synthase complex is composed of three subunits. PurQ produces an ammonia molecule by converting glutamine to glutamate. PurL transfers the ammonia molecule to FGAR to form FGAM in an ATP-dependent manner. PurS interacts with PurQ and PurL and is thought to assist in the transfer of the ammonia molecule from PurQ to PurL. This is Phosphoribosylformylglycinamidine synthase subunit PurL from Corynebacterium ammoniagenes (Brevibacterium ammoniagenes).